A 184-amino-acid chain; its full sequence is Alpha-tubulin N-acetyltransferase (184 aa).

In terms of domain architecture, N-acetyltransferase spans 1–170; it reads METFNHIDIK…NHFVIFSNYF (170 aa). Acetyl-CoA-binding positions include 104–117 and 140–149; these read FYILEKFQKRGLGI and SYKLQNFLKK.

The protein belongs to the acetyltransferase ATAT1 family.

The enzyme catalyses L-lysyl-[alpha-tubulin] + acetyl-CoA = N(6)-acetyl-L-lysyl-[alpha-tubulin] + CoA + H(+). Functionally, specifically acetylates 'Lys-40' in alpha-tubulin on the lumenal side of microtubules. Promotes microtubule destabilization and accelerates microtubule dynamics; this activity may be independent of acetylation activity. Acetylates alpha-tubulin with a slow enzymatic rate, due to a catalytic site that is not optimized for acetyl transfer. Enters the microtubule through each end and diffuses quickly throughout the lumen of microtubules. Acetylates only long/old microtubules because of its slow acetylation rate since it does not have time to act on dynamically unstable microtubules before the enzyme is released. The chain is Alpha-tubulin N-acetyltransferase from Plasmodium falciparum (isolate 3D7).